The sequence spans 502 residues: Lysine--tRNA ligase (502 aa).

The Mg(2+) site is built by glutamate 403 and glutamate 410.

It belongs to the class-II aminoacyl-tRNA synthetase family. Homodimer. Mg(2+) is required as a cofactor.

It localises to the cytoplasm. It carries out the reaction tRNA(Lys) + L-lysine + ATP = L-lysyl-tRNA(Lys) + AMP + diphosphate. This chain is Lysine--tRNA ligase, found in Synechococcus sp. (strain CC9902).